Reading from the N-terminus, the 312-residue chain is uncharacterized protein (312 aa).

10 helical membrane passes run 13–33 (AAGT…SIWI), 45–65 (AVLL…FLIY), 81–101 (ACGA…IGLN), 105–125 (AMVE…FTAC), 133–153 (IQDL…LGGW), 162–182 (MIGA…LVLS), 198–218 (GMTA…AAGM), 229–249 (MYGL…VLML), 260–280 (AAAI…LFLG), and 283–303 (LGLI…GMEY). Positions 173–303 (AVYAGYLVLS…VFFVITGMEY (131 aa)) constitute an EamA domain.

This sequence belongs to the EamA transporter family.

The protein resides in the cell membrane. This is an uncharacterized protein from Bacillus subtilis (strain 168).